Reading from the N-terminus, the 55-residue chain is ATP synthase protein 8 (55 aa).

Residues 4 to 24 form a helical membrane-spanning segment; sequence LNPNPWFTILIFTWAVFLTIL.

The protein belongs to the ATPase protein 8 family. F-type ATPases have 2 components, CF(1) - the catalytic core - and CF(0) - the membrane proton channel.

Its subcellular location is the mitochondrion membrane. Its function is as follows. Mitochondrial membrane ATP synthase (F(1)F(0) ATP synthase or Complex V) produces ATP from ADP in the presence of a proton gradient across the membrane which is generated by electron transport complexes of the respiratory chain. F-type ATPases consist of two structural domains, F(1) - containing the extramembraneous catalytic core and F(0) - containing the membrane proton channel, linked together by a central stalk and a peripheral stalk. During catalysis, ATP synthesis in the catalytic domain of F(1) is coupled via a rotary mechanism of the central stalk subunits to proton translocation. Part of the complex F(0) domain. Minor subunit located with subunit a in the membrane. The sequence is that of ATP synthase protein 8 (mt-atp8) from Polypterus ornatipinnis (Ornate bichir).